Consider the following 1225-residue polypeptide: RNA-directed RNA polymerase VP2 (1225 aa).

The 231-residue stretch at 497–727 (LFLSFMPYTI…NSIVLLQQLV (231 aa)) folds into the RdRp catalytic domain.

It belongs to the reoviridae RNA-directed RNA polymerase family. As to quaternary structure, interacts with VP6.

It catalyses the reaction RNA(n) + a ribonucleoside 5'-triphosphate = RNA(n+1) + diphosphate. RNA-directed RNA polymerase that is involved in transcription and genome replication. Following infection, it catalyzes the synthesis of fully conservative plus strands. After core assembly, which consists in recruitment of one capped plus-strand for each genomic segments and polymerase complexes, the polymerase switches mode and catalyzes the synthesis of complementary minus-strands. This Lymantria dispar (Gypsy moth) protein is RNA-directed RNA polymerase VP2 (S2).